We begin with the raw amino-acid sequence, 273 residues long: Dermonecrotic toxin LapSicTox-alphaIB1b2 (273 aa).

Residue His5 is part of the active site. The Mg(2+) site is built by Glu25 and Asp27. His41 (nucleophile) is an active-site residue. Disulfide bonds link Cys45/Cys51 and Cys47/Cys190. A Mg(2+)-binding site is contributed by Asp85. An N-linked (GlcNAc...) asparagine glycan is attached at Asn250.

Belongs to the arthropod phospholipase D family. Class II subfamily. It depends on Mg(2+) as a cofactor. Expressed by the venom gland.

It is found in the secreted. The enzyme catalyses an N-(acyl)-sphingosylphosphocholine = an N-(acyl)-sphingosyl-1,3-cyclic phosphate + choline. The catalysed reaction is an N-(acyl)-sphingosylphosphoethanolamine = an N-(acyl)-sphingosyl-1,3-cyclic phosphate + ethanolamine. It catalyses the reaction a 1-acyl-sn-glycero-3-phosphocholine = a 1-acyl-sn-glycero-2,3-cyclic phosphate + choline. It carries out the reaction a 1-acyl-sn-glycero-3-phosphoethanolamine = a 1-acyl-sn-glycero-2,3-cyclic phosphate + ethanolamine. Dermonecrotic toxins cleave the phosphodiester linkage between the phosphate and headgroup of certain phospholipids (sphingolipid and lysolipid substrates), forming an alcohol (often choline) and a cyclic phosphate. This toxin acts on sphingomyelin (SM). It may also act on ceramide phosphoethanolamine (CPE), lysophosphatidylcholine (LPC) and lysophosphatidylethanolamine (LPE), but not on lysophosphatidylserine (LPS), and lysophosphatidylglycerol (LPG). It acts by transphosphatidylation, releasing exclusively cyclic phosphate products as second products. Induces dermonecrosis, hemolysis, increased vascular permeability, edema, inflammatory response, and platelet aggregation. The protein is Dermonecrotic toxin LapSicTox-alphaIB1b2 of Loxosceles apachea (Apache recluse spider).